Consider the following 320-residue polypeptide: Cytochrome f (320 aa).

An N-terminal signal peptide occupies residues 1-35 (MQTRNTLSWIKEEITRSISVSLMIYIITWASISNA). The heme site is built by tyrosine 36, cysteine 56, cysteine 59, and histidine 60. A helical transmembrane segment spans residues 286-306 (VQGLLFFLASVVLAQIFLVLK).

The protein belongs to the cytochrome f family. In terms of assembly, the 4 large subunits of the cytochrome b6-f complex are cytochrome b6, subunit IV (17 kDa polypeptide, petD), cytochrome f and the Rieske protein, while the 4 small subunits are PetG, PetL, PetM and PetN. The complex functions as a dimer. Heme serves as cofactor.

Its subcellular location is the plastid. The protein localises to the chloroplast thylakoid membrane. Its function is as follows. Component of the cytochrome b6-f complex, which mediates electron transfer between photosystem II (PSII) and photosystem I (PSI), cyclic electron flow around PSI, and state transitions. This is Cytochrome f from Carica papaya (Papaya).